Consider the following 589-residue polypeptide: Mini-chromosome maintenance complex-binding protein (589 aa).

The disordered stretch occupies residues 163-211 (VDEEMTDSMDSSTLEAGRNGSPFKKMKVGEATSSASESQVPQTSGIPPA). Positions 193-207 (ATSSASESQVPQTSG) are enriched in polar residues.

The protein belongs to the MCMBP family. As to quaternary structure, interacts with the MCM complex.

It is found in the nucleus. Its function is as follows. Associated component of the MCM complex that acts as a regulator of DNA replication. Binds to the MCM complex during late S phase and may act by promoting the disassembly of the MCM complex from chromatin. Required for sister chromatid cohesion. The polypeptide is Mini-chromosome maintenance complex-binding protein (ETG1) (Arabidopsis thaliana (Mouse-ear cress)).